A 209-amino-acid polypeptide reads, in one-letter code: Ubiquitin-conjugating enzyme E2 S (209 aa).

The region spanning 14 to 160 is the UBC core domain; the sequence is QTIRQVMREL…ARMMTEIHAQ (147 aa). Cysteine 98 serves as the catalytic Glycyl thioester intermediate. The tract at residues 164 to 209 is disordered; it reads CAAGAAGDSKDDDGPSTKKHAGLDKKLQDKKKEKLLKEKKRMLKRL. Residues 171 to 199 are compositionally biased toward basic and acidic residues; it reads DSKDDDGPSTKKHAGLDKKLQDKKKEKLL. Residues 200-209 show a composition bias toward basic residues; that stretch reads KEKKRMLKRL.

It belongs to the ubiquitin-conjugating enzyme family.

It carries out the reaction S-ubiquitinyl-[E1 ubiquitin-activating enzyme]-L-cysteine + [E2 ubiquitin-conjugating enzyme]-L-cysteine = [E1 ubiquitin-activating enzyme]-L-cysteine + S-ubiquitinyl-[E2 ubiquitin-conjugating enzyme]-L-cysteine.. Its pathway is protein modification; protein ubiquitination. In terms of biological role, catalyzes the covalent attachment of ubiquitin to other proteins. Acts as an essential factor of the anaphase promoting complex/cyclosome (APC/C), a cell cycle-regulated ubiquitin ligase that controls progression through mitosis. Acts by specifically elongating polyubiquitin chains initiated by the E2 enzyme vih/UbcH10 on APC/C substrates, enhancing the degradation of APC/C substrates by the proteasome and promoting mitotic exit. In Drosophila ananassae (Fruit fly), this protein is Ubiquitin-conjugating enzyme E2 S.